Here is a 100-residue protein sequence, read N- to C-terminus: Urease subunit gamma (100 aa).

It belongs to the urease gamma subunit family. As to quaternary structure, heterotrimer of UreA (gamma), UreB (beta) and UreC (alpha) subunits. Three heterotrimers associate to form the active enzyme.

It is found in the cytoplasm. The enzyme catalyses urea + 2 H2O + H(+) = hydrogencarbonate + 2 NH4(+). The protein operates within nitrogen metabolism; urea degradation; CO(2) and NH(3) from urea (urease route): step 1/1. This chain is Urease subunit gamma, found in Azotobacter vinelandii (strain DJ / ATCC BAA-1303).